The following is a 629-amino-acid chain: Chaperone protein DnaK (629 aa).

Residue T195 is modified to Phosphothreonine; by autocatalysis. 2 disordered regions span residues 514–533 and 543–629; these read EAEQ…EKRN and LGQL…KPAE. Over residues 555 to 590 the composition is skewed to basic and acidic residues; it reads DAKDRLKAAADEAEEAVRSDDDSRIERAQKQLEEAM. Residues 595–614 are compositionally biased toward low complexity; it reads TAAQSGSQNQAGQGAQTQTG. The segment covering 615-629 has biased composition (basic and acidic residues); the sequence is RQEDDVIDADFKPAE.

The protein belongs to the heat shock protein 70 family.

In terms of biological role, acts as a chaperone. The sequence is that of Chaperone protein DnaK from Deinococcus geothermalis (strain DSM 11300 / CIP 105573 / AG-3a).